We begin with the raw amino-acid sequence, 857 residues long: Leucine--tRNA ligase (857 aa).

The 'HIGH' region signature appears at 42-52; it reads PYPSGNLHMGH. A 'KMSKS' region motif is present at residues 615–619; that stretch reads KMSKS. Residue Lys618 coordinates ATP.

It belongs to the class-I aminoacyl-tRNA synthetase family.

It is found in the cytoplasm. The catalysed reaction is tRNA(Leu) + L-leucine + ATP = L-leucyl-tRNA(Leu) + AMP + diphosphate. This Thermosynechococcus vestitus (strain NIES-2133 / IAM M-273 / BP-1) protein is Leucine--tRNA ligase.